Here is a 95-residue protein sequence, read N- to C-terminus: MGGISIWQLLIIALIVVLLFGTKKLRSLGGDLGGAVKGFKNAMTSEEDKKALEDNAADKPAADAAKVTETAKVAETAPVAETAEKKAESKGKEQA.

A helical transmembrane segment spans residues 1–21; it reads MGGISIWQLLIIALIVVLLFG. Residues 50–61 show a composition bias toward basic and acidic residues; sequence KALEDNAADKPA. The tract at residues 50–95 is disordered; sequence KALEDNAADKPAADAAKVTETAKVAETAPVAETAEKKAESKGKEQA. Over residues 62–81 the composition is skewed to low complexity; that stretch reads ADAAKVTETAKVAETAPVAE. Basic and acidic residues predominate over residues 82–95; sequence TAEKKAESKGKEQA.

This sequence belongs to the TatA/E family. In terms of assembly, the Tat system comprises two distinct complexes: a TatABC complex, containing multiple copies of TatA, TatB and TatC subunits, and a separate TatA complex, containing only TatA subunits. Substrates initially bind to the TatABC complex, which probably triggers association of the separate TatA complex to form the active translocon.

The protein localises to the cell inner membrane. Functionally, part of the twin-arginine translocation (Tat) system that transports large folded proteins containing a characteristic twin-arginine motif in their signal peptide across membranes. TatA could form the protein-conducting channel of the Tat system. In Shewanella halifaxensis (strain HAW-EB4), this protein is Sec-independent protein translocase protein TatA.